Reading from the N-terminus, the 349-residue chain is 6-phosphogluconolactonase (349 aa).

Positions 125–151 (LQSPVSEAAHTGKGPHERQEKPHTHYA) are disordered. A compositionally biased stretch (basic and acidic residues) spans 138-147 (GPHERQEKPH).

The protein belongs to the cycloisomerase 2 family.

The enzyme catalyses 6-phospho-D-glucono-1,5-lactone + H2O = 6-phospho-D-gluconate + H(+). The protein operates within carbohydrate degradation; pentose phosphate pathway; D-ribulose 5-phosphate from D-glucose 6-phosphate (oxidative stage): step 2/3. In terms of biological role, catalyzes the hydrolysis of 6-phosphogluconolactone to 6-phosphogluconate. This Bacillus subtilis (strain 168) protein is 6-phosphogluconolactonase (pgl).